Reading from the N-terminus, the 33-residue chain is Photosystem II reaction center protein Psb30 (33 aa).

Residues 5-25 form a helical membrane-spanning segment; the sequence is LIGQLVTVALVVGAGPIIIGA.

The protein belongs to the Psb30/Ycf12 family. In terms of assembly, PSII is composed of 1 copy each of membrane proteins PsbA, PsbB, PsbC, PsbD, PsbE, PsbF, PsbH, PsbI, PsbJ, PsbK, PsbL, PsbM, PsbT, PsbX, PsbY, PsbZ, Psb30/Ycf12, peripheral proteins of the oxygen-evolving complex and a large number of cofactors. It forms dimeric complexes.

It is found in the plastid. The protein resides in the chloroplast thylakoid membrane. In terms of biological role, a core subunit of photosystem II (PSII), probably helps stabilize the reaction center. The chain is Photosystem II reaction center protein Psb30 from Ostreococcus tauri.